Reading from the N-terminus, the 101-residue chain is MIKSELVQRIAEHNPHLYQRDVENIVNAILDEIVDALARGDRVELRGFGAFSVKHRPARAGRNPRTGAHVPVDQKSVPFFKTGKEMRERLNRETGDTDTGA.

The tract at residues 57-77 (PARAGRNPRTGAHVPVDQKSV) is disordered.

It belongs to the bacterial histone-like protein family. Heterodimer of an alpha and a beta chain.

In terms of biological role, this protein is one of the two subunits of integration host factor, a specific DNA-binding protein that functions in genetic recombination as well as in transcriptional and translational control. The chain is Integration host factor subunit beta from Rhodopseudomonas palustris (strain HaA2).